A 387-amino-acid chain; its full sequence is Solute carrier family 25 protein Shawn (387 aa).

3 Solcar repeats span residues 37 to 156 (IRPL…FKAR), 179 to 263 (IPFL…LKSS), and 269 to 366 (PTFS…GKSF). 6 helical membrane passes run 43-63 (VASACTGAMVTACFMTPLDVI), 128-148 (LWSGLSPTLISALPSTIIYFV), 179-199 (IPFLVPLLAGVSGRILAVTCV), 235-255 (LWRGLPPTILRDVPFSGIYWT), 275-295 (FAAGAISGSVAATITTPFDVV), and 337-357 (AIFSGLGPRLFKVAPACAIMI).

This sequence belongs to the mitochondrial carrier (TC 2.A.29) family.

The protein localises to the mitochondrion inner membrane. Functionally, mitochondrial transporter required for glutathione import into mitochondria. The chain is Solute carrier family 25 protein Shawn from Drosophila melanogaster (Fruit fly).